The primary structure comprises 679 residues: Transmembrane protein 214-B (679 aa).

The segment at 1-94 is disordered; sequence MASGAPDGKW…KKKPQSGDSV (94 aa). Residues 18–30 show a composition bias toward basic and acidic residues; the sequence is KSGERREGERKAL. N-linked (GlcNAc...) asparagine glycosylation is found at Asn-70, Asn-298, and Asn-322. 2 helical membrane-spanning segments follow: residues 468–488 and 606–626; these read GGFPWWRLIVIAFVFLFGSVL and LLLHLHQTYLLPAVTYLEAAV.

Belongs to the TMEM214 family. Constitutively interacts with CASP4; required for the localization of procaspase 4 to the ER.

It localises to the endoplasmic reticulum membrane. Critical mediator, in cooperation with CASP4, of endoplasmic reticulum-stress induced apoptosis. Required or the activation of CASP4 following endoplasmic reticulum stress. This chain is Transmembrane protein 214-B (tmem214-b), found in Xenopus laevis (African clawed frog).